The following is a 218-amino-acid chain: Pyridoxine/pyridoxamine 5'-phosphate oxidase (218 aa).

Residues 14 to 17 (RREY) and K72 each bind substrate. Residues 67–72 (RIVLLK), 82–83 (YT), R88, K89, and Q111 each bind FMN. Substrate is bound by residues Y129, R133, and S137. Residues 146–147 (QS) and W191 each bind FMN. 197–199 (RLH) serves as a coordination point for substrate. R201 is a binding site for FMN.

It belongs to the pyridoxamine 5'-phosphate oxidase family. As to quaternary structure, homodimer. It depends on FMN as a cofactor.

The enzyme catalyses pyridoxamine 5'-phosphate + O2 + H2O = pyridoxal 5'-phosphate + H2O2 + NH4(+). The catalysed reaction is pyridoxine 5'-phosphate + O2 = pyridoxal 5'-phosphate + H2O2. It functions in the pathway cofactor metabolism; pyridoxal 5'-phosphate salvage; pyridoxal 5'-phosphate from pyridoxamine 5'-phosphate: step 1/1. It participates in cofactor metabolism; pyridoxal 5'-phosphate salvage; pyridoxal 5'-phosphate from pyridoxine 5'-phosphate: step 1/1. Functionally, catalyzes the oxidation of either pyridoxine 5'-phosphate (PNP) or pyridoxamine 5'-phosphate (PMP) into pyridoxal 5'-phosphate (PLP). This Enterobacter sp. (strain 638) protein is Pyridoxine/pyridoxamine 5'-phosphate oxidase.